The following is a 783-amino-acid chain: Na(+)/H(+) exchanger protein 7 (783 aa).

Residues 1 to 18 (MWIKLLFFFTTLLVSTSG) traverse the membrane as a helical segment. Topologically, residues 19-108 (LGDDGITALL…WHWDYVKNEL (90 aa)) are extracellular. The helical transmembrane segment at 109-129 (VLTLFFIVIGLFKLVYHHTFV) threads the bilayer. The Cytoplasmic portion of the chain corresponds to 130–132 (TRK). A helical transmembrane segment spans residues 133-153 (ILPESCCLIFIGIAIGFFFVG). Residues 154-159 (DATHAS) are Extracellular-facing. Residues 160 to 180 (IKFLEFKSKVFFFYLLPPIIL) form a helical membrane-spanning segment. Residues 181 to 206 (ESAYSLKDRAFIENIGTILLYAVVGT) are Cytoplasmic-facing. Residues 207–227 (ILNIVLLAAALLILIWVGIMG) form a helical membrane-spanning segment. Residues 228–235 (KYNLSVMD) are Extracellular-facing. Residues 236–256 (ILTFASLVAAVDPVAVLAVFQ) form a helical membrane-spanning segment. The Cytoplasmic portion of the chain corresponds to 257 to 262 (EVGVNK). Residues 263–283 (MLYFMVFGESLFNDAVTIVCY) traverse the membrane as a helical segment. Over 284–299 (NLAIEFQTLPDFTWYH) the chain is Extracellular. A helical membrane pass occupies residues 300–320 (GFLGLLSFLCVSIGGLIIGLI). Residues 321–350 (CGAISSFVTKFTTDVRVVEPVVLFGMAYLA) lie on the Cytoplasmic side of the membrane. Residues 351 to 371 (YLGSEMFHFSGIIALIACGLF) traverse the membrane as a helical segment. The Extracellular segment spans residues 372–390 (QTHYACCNISYKSFTSVMY). N-linked (GlcNAc...) asparagine glycosylation occurs at asparagine 379. Positions 391-411 (ITKVCSTLCESLIFIILGVML) form an intramembrane region, helical. Residues 412–424 (VNEREWFWTDWHP) lie on the Extracellular side of the membrane. A helical transmembrane segment spans residues 425–445 (VFSAVSVVLCVVVRFGVTFFL). The Cytoplasmic portion of the chain corresponds to 446–464 (TYFVNQFTGGVRHISFQEQ). Residues 465-485 (FIMSYGGLRGAVSFSLVFMIS) traverse the membrane as a helical segment. Topologically, residues 486–492 (ANPDVKN) are extracellular. The chain crosses the membrane as a helical span at residues 493–513 (TMLGATYAVILFTNIIQGSTI). Residues 514-783 (KLFVKWLNIR…TITESEETSF (270 aa)) lie on the Cytoplasmic side of the membrane. A coiled-coil region spans residues 649–702 (DNEDADQRANELIKDVSSIRQLMHNPFEDCYLDRNLTHEEEKEQARLKMKKTRA). Residues 745–783 (RPSTSTRVSVEDEEQGLTMKEMEEEHPLMTITESEETSF) are disordered.

This sequence belongs to the monovalent cation:proton antiporter 1 (CPA1) transporter (TC 2.A.36) family. Interacts (via C-terminus) with cmd-1. In terms of tissue distribution, detected in the posterior cells of the intestine.

It is found in the basolateral cell membrane. Its function is as follows. Na+/H+ exchanger which mediates the transient acidification of the coelomic space and plays a role in contraction of posterior body muscles during defecation. Probably by regulating the defecation motor program, required for fatty acid uptake by intestinal cells. This is Na(+)/H(+) exchanger protein 7 from Caenorhabditis elegans.